The primary structure comprises 404 residues: Phosphopentomutase (404 aa).

Residues Asp-10, Asp-303, His-308, Asp-344, His-345, and His-356 each contribute to the Mn(2+) site.

This sequence belongs to the phosphopentomutase family. It depends on Mn(2+) as a cofactor.

The protein resides in the cytoplasm. The catalysed reaction is 2-deoxy-alpha-D-ribose 1-phosphate = 2-deoxy-D-ribose 5-phosphate. It catalyses the reaction alpha-D-ribose 1-phosphate = D-ribose 5-phosphate. It participates in carbohydrate degradation; 2-deoxy-D-ribose 1-phosphate degradation; D-glyceraldehyde 3-phosphate and acetaldehyde from 2-deoxy-alpha-D-ribose 1-phosphate: step 1/2. Isomerase that catalyzes the conversion of deoxy-ribose 1-phosphate (dRib-1-P) and ribose 1-phosphate (Rib-1-P) to deoxy-ribose 5-phosphate (dRib-5-P) and ribose 5-phosphate (Rib-5-P), respectively. This is Phosphopentomutase from Shewanella sp. (strain ANA-3).